We begin with the raw amino-acid sequence, 36 residues long: uncharacterized protein (36 aa).

This is an uncharacterized protein from Saccharomyces cerevisiae (strain ATCC 204508 / S288c) (Baker's yeast).